We begin with the raw amino-acid sequence, 163 residues long: Seed allergenic protein RAG1 (163 aa).

The signal sequence occupies residues 1–27 (MASNKVVFSVLLLVVLSVLAAAMATMA). Intrachain disulfides connect Cys39–Cys90, Cys53–Cys78, Cys61–Cys122, Cys79–Cys138, and Cys92–Cys150.

It belongs to the cereal trypsin/alpha-amylase inhibitor family. Post-translationally, five disulfide bonds are present.

It is found in the secreted. Seed storage protein. The chain is Seed allergenic protein RAG1 (RAG1) from Oryza sativa subsp. japonica (Rice).